We begin with the raw amino-acid sequence, 173 residues long: Ribosomal RNA large subunit methyltransferase H (173 aa).

Residues leucine 89 and glycine 121 each coordinate S-adenosyl-L-methionine.

This sequence belongs to the RNA methyltransferase RlmH family. As to quaternary structure, homodimer.

The protein localises to the cytoplasm. The catalysed reaction is pseudouridine(1915) in 23S rRNA + S-adenosyl-L-methionine = N(3)-methylpseudouridine(1915) in 23S rRNA + S-adenosyl-L-homocysteine + H(+). Its function is as follows. Specifically methylates the pseudouridine at position 1915 (m3Psi1915) in 23S rRNA. This chain is Ribosomal RNA large subunit methyltransferase H, found in Chelativorans sp. (strain BNC1).